Reading from the N-terminus, the 255-residue chain is tRNA (guanine-N(1)-)-methyltransferase (255 aa).

Residues G113 and 133–138 contribute to the S-adenosyl-L-methionine site; that span reads IGDYVL.

It belongs to the RNA methyltransferase TrmD family. Homodimer.

It localises to the cytoplasm. It catalyses the reaction guanosine(37) in tRNA + S-adenosyl-L-methionine = N(1)-methylguanosine(37) in tRNA + S-adenosyl-L-homocysteine + H(+). In terms of biological role, specifically methylates guanosine-37 in various tRNAs. This Escherichia coli O127:H6 (strain E2348/69 / EPEC) protein is tRNA (guanine-N(1)-)-methyltransferase.